Here is a 235-residue protein sequence, read N- to C-terminus: tRNA1(Val) (adenine(37)-N6)-methyltransferase (235 aa).

It belongs to the methyltransferase superfamily. tRNA (adenine-N(6)-)-methyltransferase family.

The protein resides in the cytoplasm. It catalyses the reaction adenosine(37) in tRNA1(Val) + S-adenosyl-L-methionine = N(6)-methyladenosine(37) in tRNA1(Val) + S-adenosyl-L-homocysteine + H(+). In terms of biological role, specifically methylates the adenine in position 37 of tRNA(1)(Val) (anticodon cmo5UAC). The protein is tRNA1(Val) (adenine(37)-N6)-methyltransferase of Glaesserella parasuis serovar 5 (strain SH0165) (Haemophilus parasuis).